Reading from the N-terminus, the 149-residue chain is SsrA-binding protein (149 aa).

A disordered region spans residues 121 to 149 (GKKQHDKRAAEKDREWQREKQRLVRSAQH). Over residues 127–142 (KRAAEKDREWQREKQR) the composition is skewed to basic and acidic residues.

Belongs to the SmpB family.

It is found in the cytoplasm. Its function is as follows. Required for rescue of stalled ribosomes mediated by trans-translation. Binds to transfer-messenger RNA (tmRNA), required for stable association of tmRNA with ribosomes. tmRNA and SmpB together mimic tRNA shape, replacing the anticodon stem-loop with SmpB. tmRNA is encoded by the ssrA gene; the 2 termini fold to resemble tRNA(Ala) and it encodes a 'tag peptide', a short internal open reading frame. During trans-translation Ala-aminoacylated tmRNA acts like a tRNA, entering the A-site of stalled ribosomes, displacing the stalled mRNA. The ribosome then switches to translate the ORF on the tmRNA; the nascent peptide is terminated with the 'tag peptide' encoded by the tmRNA and targeted for degradation. The ribosome is freed to recommence translation, which seems to be the essential function of trans-translation. This is SsrA-binding protein from Thiobacillus denitrificans (strain ATCC 25259 / T1).